The primary structure comprises 90 residues: Small ribosomal subunit protein bS16 (90 aa).

This sequence belongs to the bacterial ribosomal protein bS16 family.

This is Small ribosomal subunit protein bS16 from Lactiplantibacillus plantarum (strain ATCC BAA-793 / NCIMB 8826 / WCFS1) (Lactobacillus plantarum).